The sequence spans 207 residues: MLQLTEKFKGTTTVGIVCSDGVVLAADRRASLGNIVYAKNVTKIHKIDEHLAIAGAGDVGDILNLVRLLRAEAKLYYAQSGKRMSVKALATLLANMLNGARMLPYLAWFLVGGFDEKPRLYSVDMMGGITEDKYVAAGSGMEFAYSVLDSEYREDLKVREGIKIAVEAINSAIKRDVFSGDGIMVVTITEEGYRELSNSRLKAILRQ.

The propeptide at 1–10 (MLQLTEKFKG) is removed in mature form; by autocatalysis. T11 functions as the Nucleophile in the catalytic mechanism.

It belongs to the peptidase T1B family. The 20S proteasome core is composed of 14 alpha and 14 beta subunits that assemble into four stacked heptameric rings, resulting in a barrel-shaped structure. The two inner rings, each composed of seven catalytic beta subunits, are sandwiched by two outer rings, each composed of seven alpha subunits. The catalytic chamber with the active sites is on the inside of the barrel. Has a gated structure, the ends of the cylinder being occluded by the N-termini of the alpha-subunits. Is capped at one or both ends by the proteasome regulatory ATPase, PAN.

It localises to the cytoplasm. It catalyses the reaction Cleavage of peptide bonds with very broad specificity.. The formation of the proteasomal ATPase PAN-20S proteasome complex, via the docking of the C-termini of PAN into the intersubunit pockets in the alpha-rings, triggers opening of the gate for substrate entry. Interconversion between the open-gate and close-gate conformations leads to a dynamic regulation of the 20S proteasome proteolysis activity. Functionally, component of the proteasome core, a large protease complex with broad specificity involved in protein degradation. The protein is Proteasome subunit beta 2 of Pyrococcus abyssi (strain GE5 / Orsay).